A 127-amino-acid polypeptide reads, in one-letter code: Small ribosomal subunit protein uS13 (127 aa).

The tract at residues 90–127 (KRHREGLPVNGQRTRTNARTRKGKRKTVAGRSQSTQKK) is disordered. Residues 105–117 (TNARTRKGKRKTV) are compositionally biased toward basic residues.

It belongs to the universal ribosomal protein uS13 family. Part of the 30S ribosomal subunit. Forms a loose heterodimer with protein S19. Forms two bridges to the 50S subunit in the 70S ribosome.

Its function is as follows. Located at the top of the head of the 30S subunit, it contacts several helices of the 16S rRNA. In the 70S ribosome it contacts the 23S rRNA (bridge B1a) and protein L5 of the 50S subunit (bridge B1b), connecting the 2 subunits; these bridges are implicated in subunit movement. Contacts the tRNAs in the A and P-sites. This Salinibacter ruber (strain DSM 13855 / M31) protein is Small ribosomal subunit protein uS13.